Reading from the N-terminus, the 91-residue chain is MIYYLSYIRNGGQFMHTFLIVLLIIDCIALITVVLLQEGKSSGLSGAISGGAEQLFGKQKQRGVDLFLNRLTIILSILFFVLMICISYLGM.

2 helical membrane-spanning segments follow: residues 16–36 (HTFL…VVLL) and 71–91 (LTII…YLGM).

It belongs to the SecG family. As to quaternary structure, component of the Sec protein translocase complex. Heterotrimer consisting of SecY, SecE and SecG subunits. The heterotrimers can form oligomers, although 1 heterotrimer is thought to be able to translocate proteins. Interacts with SecDF, and other proteins may be involved. The channel interacts with SecA via subunit SecY. Also part of the accessory SecA2/SecY2 protein translocation apparatus required to export cell wall protein GspB.

The protein localises to the cell membrane. Functionally, subunit of the protein translocation channel SecYEG. While not essential, it considerably increases the export efficiency of extracellular proteins. The polypeptide is Protein translocase subunit SecG (Staphylococcus aureus (strain NCTC 8325 / PS 47)).